Consider the following 321-residue polypeptide: Lipoyl synthase (321 aa).

Residues cysteine 68, cysteine 73, cysteine 79, cysteine 94, cysteine 98, cysteine 101, and serine 308 each coordinate [4Fe-4S] cluster. One can recognise a Radical SAM core domain in the interval 80–297 (FNHGTATFMI…KEVALELGFT (218 aa)).

Belongs to the radical SAM superfamily. Lipoyl synthase family. The cofactor is [4Fe-4S] cluster.

It localises to the cytoplasm. The enzyme catalyses [[Fe-S] cluster scaffold protein carrying a second [4Fe-4S](2+) cluster] + N(6)-octanoyl-L-lysyl-[protein] + 2 oxidized [2Fe-2S]-[ferredoxin] + 2 S-adenosyl-L-methionine + 4 H(+) = [[Fe-S] cluster scaffold protein] + N(6)-[(R)-dihydrolipoyl]-L-lysyl-[protein] + 4 Fe(3+) + 2 hydrogen sulfide + 2 5'-deoxyadenosine + 2 L-methionine + 2 reduced [2Fe-2S]-[ferredoxin]. It functions in the pathway protein modification; protein lipoylation via endogenous pathway; protein N(6)-(lipoyl)lysine from octanoyl-[acyl-carrier-protein]: step 2/2. Functionally, catalyzes the radical-mediated insertion of two sulfur atoms into the C-6 and C-8 positions of the octanoyl moiety bound to the lipoyl domains of lipoate-dependent enzymes, thereby converting the octanoylated domains into lipoylated derivatives. The chain is Lipoyl synthase from Vibrio parahaemolyticus serotype O3:K6 (strain RIMD 2210633).